The sequence spans 682 residues: MTDAKYVLCRWGKRLWPAKVLARTETSAKNKKKKEFFLDVQILSLKEKIQVKSSAVEALQKSHIENIAAFLASQNEVPATPLEELTYRRSLRVALDVLNERTSLSPESHPIEDGITLSQKEKTDADVASQVSSAPSPSLLGEDGQAVVAQCASKRRSEYSSKSLLPSSALEDHLRCQVGPKTGLSESGAGDKSQDDSGLQLDHGQESTTKKRQRNLGEKPTRRRRSESGLSKGESVLKSQGQASSCVALASPRPPSQTRDEEPCAGVKGCDWVKSSGNIRPLSASERSRGCPTKRPRLDGGQNPPTRQLGTRTVGAAPCPRSCSGEVTMLCSAGAGDKPEEDPVSSEESTGFKSTHSLLEEEEEEEEEPPRILLYHEPRSFEVGMLVWLKYQKYPFWPAVVKSVRRRDKKASVLFIEGNMNPKGRGITVSLRRLKHFDCKEKHALLDRAKEDFAQAIGWCVSLITDYRVRLGCGSFAGSFLEYYAADISYPVRKSIQQDVLGTRFPQLGKGDPEEPVGDSQLGQWRPCRKVLPDRSRAARDRANQKLVEYIVKAKGAESHLRAILHSRKPSRWLKTFLSSSQCVTCMETYLEDEAQLDEVVEYLQGVCRDMDGQVPERGSGDRIRFILDVLLPEAIICAISAVEAVDYKTAEQKYIRGPTLSYREKEIFDNELLEERNRRRR.

Ser-105 carries the post-translational modification Phosphoserine. The segment at 121–145 (EKTDADVASQVSSAPSPSLLGEDGQ) is disordered. Residues 127–140 (VASQVSSAPSPSLL) are compositionally biased toward low complexity. Ser-168 carries the phosphoserine modification. Disordered regions lie at residues 179–318 (GPKT…GAAP) and 334–369 (GAGD…EEEP). The span at 203–220 (HGQESTTKKRQRNLGEKP) shows a compositional bias: basic and acidic residues. A phosphoserine mark is found at Ser-345 and Ser-346. The segment covering 346–357 (SEESTGFKSTHS) has biased composition (polar residues). Residues 383-444 (VGMLVWLKYQ…KHFDCKEKHA (62 aa)) form the PWWP domain.

The protein belongs to the PWWP3A family. Interacts with TP53BP1 (via BRCT domain); the interaction is not dependent on its phosphorylation status. Binds nucleosomes. Interacts with trimethylated 'Lys-36' of histone H3 (H3K36me3) (in vitro).

It is found in the nucleus. Functionally, involved in the DNA damage response pathway by contributing to the maintenance of chromatin architecture. Recruited to the vicinity of DNA breaks by TP53BP1 and plays an accessory role to facilitate damage-induced chromatin changes and promoting chromatin relaxation. Required for efficient DNA repair and cell survival following DNA damage. The polypeptide is PWWP domain-containing DNA repair factor 3A (Pwwp3a) (Mus musculus (Mouse)).